Reading from the N-terminus, the 131-residue chain is Ribosome-binding factor A (131 aa).

The protein belongs to the RbfA family. In terms of assembly, monomer. Binds 30S ribosomal subunits, but not 50S ribosomal subunits or 70S ribosomes.

It is found in the cytoplasm. One of several proteins that assist in the late maturation steps of the functional core of the 30S ribosomal subunit. Associates with free 30S ribosomal subunits (but not with 30S subunits that are part of 70S ribosomes or polysomes). Required for efficient processing of 16S rRNA. May interact with the 5'-terminal helix region of 16S rRNA. In Protochlamydia amoebophila (strain UWE25), this protein is Ribosome-binding factor A.